The chain runs to 459 residues: cAMP-dependent protein kinase regulatory subunit (459 aa).

The segment at 30 to 219 (QFCANYFNTK…TLANNLKNNF (190 aa)) is dimerization and phosphorylation. 2 disordered regions span residues 78–109 (VNDR…DTKT) and 125–168 (FDVK…PSSK). The segment covering 95-109 (HSNHDEDPHAKDTKT) has biased composition (basic and acidic residues). Over residues 146–168 (KPSSSSQPNQQSASASSKTPSSK) the composition is skewed to low complexity. Ser180 bears the Phosphoserine mark. Residues 220 to 335 (LFKQ…FLKD), Glu285, Arg294, 338 to 454 (VLKS…KSQD), Glu404, and Arg413 each bind 3',5'-cyclic AMP.

It belongs to the cAMP-dependent kinase regulatory chain family. As to quaternary structure, tetramer, composed of 2 regulatory (R) and 2 catalytic (C) subunits. In the presence of cAMP it dissociates into 2 active monomeric C subunits and an R dimer.

This is cAMP-dependent protein kinase regulatory subunit (BCY1) from Candida albicans (strain SC5314 / ATCC MYA-2876) (Yeast).